The chain runs to 973 residues: Coatomer subunit beta (973 aa).

2 HEAT repeats span residues 98–133 (HEMI…REAE) and 134–170 (LLEQ…VSEH). Position 181 is a phosphoserine (S181). HEAT repeat units lie at residues 279–317 (NVLV…NNVG) and 318–354 (ALEE…SRNA). S540 is subject to Phosphoserine.

As to quaternary structure, oligomeric complex that consists of at least the alpha, beta, beta', gamma, delta, epsilon and zeta subunits. The complex interacts with ARF1 and PAB1. The N-terminus is blocked.

The protein resides in the cytoplasm. Its subcellular location is the golgi apparatus membrane. It is found in the cytoplasmic vesicle. The protein localises to the COPI-coated vesicle membrane. In terms of biological role, the coatomer is a cytosolic protein complex that binds to dilysine motifs and reversibly associates with Golgi non-clathrin-coated vesicles, which further mediate biosynthetic protein transport from the ER, via the Golgi up to the trans Golgi network. Coatomer complex is required for budding from Golgi membranes, and is essential for the retrograde Golgi-to-ER transport of dilysine-tagged proteins. Required for mitochondrial morphology. The sequence is that of Coatomer subunit beta (SEC26) from Saccharomyces cerevisiae (strain ATCC 204508 / S288c) (Baker's yeast).